We begin with the raw amino-acid sequence, 410 residues long: Transcription factor Dp-1 (410 aa).

Position 3 is an N6-acetyllysine (Lys3). Position 23 is a phosphoserine; by CDK2 (Ser23). The interval 77 to 114 is disordered; sequence VVGSPHTPNTHFVSQNQPSDPSPWSAGKRNRKGEKNGK. Residues 82-95 are compositionally biased toward polar residues; that stretch reads HTPNTHFVSQNQPS. Residues 104–114 are compositionally biased toward basic residues; it reads KRNRKGEKNGK. The interval 105-127 is interaction with CEBPA; sequence RNRKGEKNGKGLRHFSMKVCEKV. The DNA-binding element occupies 113 to 195; that stretch reads GKGLRHFSMK…KKEIKWIGLP (83 aa). The DEF box motif lies at 161 to 195; sequence DQKNIRRRVYDALNVLMAMNIISKEKKEIKWIGLP. Residues 204 to 277 form a dimerization region; the sequence is SLEVERQRRL…KKTVIDCSIS (74 aa). The interval 211-327 is enhances binding of RB protein to E2F; the sequence is RRLERIKQKQ…DLRVARSLVP (117 aa). The tract at residues 214–246 is DCB1; it reads ERIKQKQSQLQELILQQIAFKNLVQRNRQVEQQ. Residues 259–315 form a DCB2 region; the sequence is LPFIIVNTSKKTVIDCSISNDKFEYLFNFDNTFEIHDDIEVLKRMGMACGLESGSCS. Positions 370 to 410 are disordered; it reads GALATSSSGSQYSGSRVETPVSCVGEDDEDDEDFNENEEED. The segment covering 375–384 has biased composition (low complexity); the sequence is SSSGSQYSGS. Residues 394 to 410 show a composition bias toward acidic residues; it reads GEDDEDDEDFNENEEED.

It belongs to the E2F/DP family. In terms of assembly, component of the E2F:DP transcription factor complex. Forms heterodimers with E2F family members. The complex can interact with hypophosphorylated retinoblastoma protein RB1 and related proteins (RBL1 and RBL2) that inhibit the E2F transactivation domain. This repression involves recruitment of histone deacetylase (HDAC). During the cell cycle, from mid-to-late G1 phase, RB family members become phosphorylated, detach from the DRTF1/E2F complex to render E2F transcriptionally active. Part of the E2F6.com-1 complex in G0 phase is composed of E2F6, MGA, MAX, TFDP1, CBX3, BAT8, EUHMTASE1, RING1, RNF2, MBLR, L3MBTL2 YAF2. Component of the DREAM complex (also named LINC complex) at least composed of E2F4, E2F5, LIN9, LIN37, LIN52, LIN54, MYBL1, MYBL2, RBL1, RBL2, RBBP4, TFDP1 and TFDP2. The complex exists in quiescent cells where it represses cell cycle-dependent genes. It dissociates in S phase when LIN9, LIN37, LIN52 and LIN54 form a subcomplex that binds to MYBL2. The complex TFDP1:E2F1 interacts with CEBPA; the interaction prevents CEBPA binding to target gene promoters and represses its transcriptional activity. Post-translationally, ubiquitinated by the BCR(KBTBD5) complex, leading to its subsequent degradation. In terms of processing, phosphorylation by E2F1-bound cyclin A-CDK2, in the S phase, inhibits E2F-mediated DNA binding and transactivation.

The protein localises to the nucleus. The protein resides in the cytoplasm. Can stimulate E2F-dependent transcription. Binds DNA cooperatively with E2F family members through the E2 recognition site, 5'-TTTC[CG]CGC-3', found in the promoter region of a number of genes whose products are involved in cell cycle regulation or in DNA replication. The E2F1:DP complex appears to mediate both cell proliferation and apoptosis. Blocks adipocyte differentiation by repressing CEBPA binding to its target gene promoters. This Bos taurus (Bovine) protein is Transcription factor Dp-1 (TFDP1).